The sequence spans 293 residues: 33 kDa chaperonin (293 aa).

2 disulfide bridges follow: cysteine 231–cysteine 233 and cysteine 264–cysteine 267.

The protein belongs to the HSP33 family. Post-translationally, under oxidizing conditions two disulfide bonds are formed involving the reactive cysteines. Under reducing conditions zinc is bound to the reactive cysteines and the protein is inactive.

The protein localises to the cytoplasm. Redox regulated molecular chaperone. Protects both thermally unfolding and oxidatively damaged proteins from irreversible aggregation. Plays an important role in the bacterial defense system toward oxidative stress. This chain is 33 kDa chaperonin, found in Yersinia pseudotuberculosis serotype O:1b (strain IP 31758).